We begin with the raw amino-acid sequence, 635 residues long: Elongation factor 4 (635 aa).

One can recognise a tr-type G domain in the interval 11-193 (EKIRNFSIIA…QIVEKVPAPT (183 aa)). Residues 23–28 (DHGKST) and 140–143 (NKID) each bind GTP.

Belongs to the TRAFAC class translation factor GTPase superfamily. Classic translation factor GTPase family. LepA subfamily.

It is found in the cell membrane. The catalysed reaction is GTP + H2O = GDP + phosphate + H(+). Required for accurate and efficient protein synthesis under certain stress conditions. May act as a fidelity factor of the translation reaction, by catalyzing a one-codon backward translocation of tRNAs on improperly translocated ribosomes. Back-translocation proceeds from a post-translocation (POST) complex to a pre-translocation (PRE) complex, thus giving elongation factor G a second chance to translocate the tRNAs correctly. Binds to ribosomes in a GTP-dependent manner. The protein is Elongation factor 4 of Streptococcus pyogenes serotype M12 (strain MGAS2096).